The chain runs to 75 residues: Sec-independent protein translocase protein TatA (75 aa).

Residues 1–21 (MGSFSIWHWLIVLVIVLLVFG) form a helical membrane-spanning segment. The disordered stretch occupies residues 41–75 (KGMHDDDKPAGKLGDDSRSAEQAREAQAERDRDAR).

This sequence belongs to the TatA/E family. In terms of assembly, the Tat system comprises two distinct complexes: a TatABC complex, containing multiple copies of TatA, TatB and TatC subunits, and a separate TatA complex, containing only TatA subunits. Substrates initially bind to the TatABC complex, which probably triggers association of the separate TatA complex to form the active translocon.

It localises to the cell inner membrane. Part of the twin-arginine translocation (Tat) system that transports large folded proteins containing a characteristic twin-arginine motif in their signal peptide across membranes. TatA could form the protein-conducting channel of the Tat system. This Xanthomonas campestris pv. campestris (strain 8004) protein is Sec-independent protein translocase protein TatA.